We begin with the raw amino-acid sequence, 433 residues long: tRNA-2-methylthio-N(6)-dimethylallyladenosine synthase (433 aa).

One can recognise an MTTase N-terminal domain in the interval 4 to 119 (KKLFIQTLGC…ITQAIKTPKF (116 aa)). Residues Cys-13, Cys-50, Cys-82, Cys-151, Cys-155, and Cys-158 each coordinate [4Fe-4S] cluster. The region spanning 137-370 (RNSIYKSYIN…QNRHSEILDE (234 aa)) is the Radical SAM core domain. In terms of domain architecture, TRAM spans 373-433 (KKQENKTFKV…KRMVLYGEII (61 aa)).

This sequence belongs to the methylthiotransferase family. MiaB subfamily. As to quaternary structure, monomer. It depends on [4Fe-4S] cluster as a cofactor.

The protein localises to the cytoplasm. The catalysed reaction is N(6)-dimethylallyladenosine(37) in tRNA + (sulfur carrier)-SH + AH2 + 2 S-adenosyl-L-methionine = 2-methylsulfanyl-N(6)-dimethylallyladenosine(37) in tRNA + (sulfur carrier)-H + 5'-deoxyadenosine + L-methionine + A + S-adenosyl-L-homocysteine + 2 H(+). Functionally, catalyzes the methylthiolation of N6-(dimethylallyl)adenosine (i(6)A), leading to the formation of 2-methylthio-N6-(dimethylallyl)adenosine (ms(2)i(6)A) at position 37 in tRNAs that read codons beginning with uridine. The protein is tRNA-2-methylthio-N(6)-dimethylallyladenosine synthase of Campylobacter jejuni subsp. doylei (strain ATCC BAA-1458 / RM4099 / 269.97).